The chain runs to 157 residues: Ribosome maturation factor RimP (157 aa).

The protein belongs to the RimP family.

The protein localises to the cytoplasm. Its function is as follows. Required for maturation of 30S ribosomal subunits. The protein is Ribosome maturation factor RimP of Synechococcus sp. (strain CC9311).